We begin with the raw amino-acid sequence, 96 residues long: Protein RnfH (96 aa).

Belongs to the UPF0125 (RnfH) family.

The chain is Protein RnfH from Escherichia coli O127:H6 (strain E2348/69 / EPEC).